Reading from the N-terminus, the 269-residue chain is MTTAPFVSPSLPRLHSARASPFPKPSVGSGGGVAFPARTYGSSLRLRSAVMSASGVGGNGSPMAPEESTVSSRLGEVKRVTKETNVHVKINLDGTGVANSSTGIPFLDHMLDQLASHGLFDVYVKATGDTHIDDHHSNEDIALAIGTALLQALGDRKGINRFGHFTAPLDEAAVEVILDLSGRPHLSCGLSIPTERVGTYDTQLVEHFFQSLVNTSGMTLHIRQLAGNNSHHIIEATFKAFARALRQATEYDLRRQGTIPSSKGVLSRS.

2 disordered regions span residues 1-31 (MTTA…GSGG) and 54-73 (SGVG…VSSR). Residues 1–52 (MTTAPFVSPSLPRLHSARASPFPKPSVGSGGGVAFPARTYGSSLRLRSAVMS) constitute a chloroplast transit peptide. Substrate is bound by residues E83, 109 to 117 (HMLDQLASH), 135 to 139 (HHSNE), R161, and R183. The Mn(2+) site is built by H109, H135, H136, and E139. Residues H207, H231, H232, and E235 each coordinate Mn(2+). Residues 231–239 (HHIIEATFK) and 261–263 (SSK) each bind substrate.

The protein belongs to the imidazoleglycerol-phosphate dehydratase family. It depends on Mn(2+) as a cofactor.

The protein localises to the plastid. It is found in the chloroplast. It catalyses the reaction D-erythro-1-(imidazol-4-yl)glycerol 3-phosphate = 3-(imidazol-4-yl)-2-oxopropyl phosphate + H2O. Its pathway is amino-acid biosynthesis; L-histidine biosynthesis; L-histidine from 5-phospho-alpha-D-ribose 1-diphosphate: step 6/9. In Triticum aestivum (Wheat), this protein is Imidazoleglycerol-phosphate dehydratase 1, chloroplastic.